Reading from the N-terminus, the 77-residue chain is ATP synthase subunit c (77 aa).

Transmembrane regions (helical) follow at residues 13–33 and 55–75; these read IATVGYGLAAIGPGIGVGIVA and FLGIAFSEALALIGLATYFIF.

This sequence belongs to the ATPase C chain family. As to quaternary structure, F-type ATPases have 2 components, F(1) - the catalytic core - and F(0) - the membrane proton channel. F(1) has five subunits: alpha(3), beta(3), gamma(1), delta(1), epsilon(1). F(0) has three main subunits: a(1), b(2) and c(10-14). The alpha and beta chains form an alternating ring which encloses part of the gamma chain. F(1) is attached to F(0) by a central stalk formed by the gamma and epsilon chains, while a peripheral stalk is formed by the delta and b chains.

The protein localises to the cell membrane. Its function is as follows. F(1)F(0) ATP synthase produces ATP from ADP in the presence of a proton or sodium gradient. F-type ATPases consist of two structural domains, F(1) containing the extramembraneous catalytic core and F(0) containing the membrane proton channel, linked together by a central stalk and a peripheral stalk. During catalysis, ATP synthesis in the catalytic domain of F(1) is coupled via a rotary mechanism of the central stalk subunits to proton translocation. Key component of the F(0) channel; it plays a direct role in translocation across the membrane. A homomeric c-ring of between 10-14 subunits forms the central stalk rotor element with the F(1) delta and epsilon subunits. The sequence is that of ATP synthase subunit c from Clavibacter michiganensis subsp. michiganensis (strain NCPPB 382).